Here is a 1125-residue protein sequence, read N- to C-terminus: MASEEASLRALESLMTEFFHDCTTNERKREIEELLNNFAQQIGAWRFCLYFLSSTRNDYVMMYSLTVFENLINKMWLGVPSQDKMEIRSCLPKLLLAHHKTLPYFIRNKLCKVIVDIGRQDWPMFYHDFFTNILQLIQSPVTTPLGLIMLKTTSEELACPREDLSVARKEELRKLLLDQVQTVLGLLTGILETVWDKHSVTAATPPPSPTSGESGDLLSNLLQSPSSAKLLNQPIPILDVESEYICSLALECLAHLFSWIPLSASITPSLLTTIFHFARFGCDIRARKMASVNGSSQNCVSGQERGRLGVLAMSCINELMSKNCVPMEFEEYLLRMFQQTFYLLQKITKDNNAHTVKSRLEELDESYIEKFTDFLRLFVSVHLRRIESYSQFPVVEFLTLLFKYTFHQPTHEGYFSCLDIWTLFLDYLTSKIKSRLGDKEAVLNRYEDALVLLLTEVLNRIQFRYNQAQLEELDDETLDDDQQTEWQRYLRQSLEVVAKVMELLPTHAFSTLFPVLQDNLEVYLGLQQFIVTSGSGHRLNITAENDCRRLHCSLRDLSSLLQAVGRLAEYFIGDVFAARFNDALTVVERLVKVTLYGSQIKLYNIETAVPSVLKPDLIDVHAQSLAALQAYSHWLAQYCSEVHRQNTQQFVTLISTTMDAITPLISTKVQDKLLLSACHLLVSLATTVRPVFLISIPAVQKVFNRITDASALRLVDKAQVLVCRALSNILLLPWPNLPENEQQWPVRSINHASLISALSRDYRNLKPSAVAPQRKMPLDDTKLIIHQTLSVLEDIVENISGESTKSRQICYQSLQESVQVSLALFPAFIHQSDVTDEMLSFFLTLFRGLRVQMGVPFTEQIIQTFLNMFTREQLAESILHEGSTGCRVVEKFLKILQVVVQEPGQVFKPFLPSIIALCMEQVYPIIAERPSPDVKAELFELLFRTLHHNWRYFFKSTVLASVQRGIAEEQMENEPQFSAIMQAFGQSFLQPDIHLFKQNLFYLETLNTKQKLYHKKIFRTAMLFQFVNVLLQVLVHKSHDLLQEEIGIAIYNMASVDFDGFFAAFLPEFLTSCDGVDANQKSVLGRNFKMDRDLPSFTQNVHRLVNDLRYYRLCNDSLPPGTVKL.

Residue Ala2 is modified to N-acetylalanine. An Importin N-terminal domain is found at 31-97 (IEELLNNFAQ…RSCLPKLLLA (67 aa)). Ser199 bears the Phosphoserine mark. Phosphothreonine occurs at positions 201 and 204. 2 positions are modified to phosphoserine: Ser208 and Ser224.

Belongs to the exportin family. Found in a complex with XPO6, Ran, ACTB and PFN1. Interacts with ACTB. Interacts with ACTB in a RanGTP-dependent manner.

The protein localises to the nucleus. Its subcellular location is the cytoplasm. Mediates the nuclear export of actin and profilin-actin complexes in somatic cells. This is Exportin-6 (XPO6) from Homo sapiens (Human).